We begin with the raw amino-acid sequence, 267 residues long: Urease accessory protein UreD (267 aa).

The protein belongs to the UreD family. As to quaternary structure, ureD, UreF and UreG form a complex that acts as a GTP-hydrolysis-dependent molecular chaperone, activating the urease apoprotein by helping to assemble the nickel containing metallocenter of UreC. The UreE protein probably delivers the nickel.

The protein resides in the cytoplasm. Its function is as follows. Required for maturation of urease via the functional incorporation of the urease nickel metallocenter. This is Urease accessory protein UreD from Synechococcus sp. (strain JA-2-3B'a(2-13)) (Cyanobacteria bacterium Yellowstone B-Prime).